The following is a 293-amino-acid chain: Ribosomal protein L11 methyltransferase (293 aa).

4 residues coordinate S-adenosyl-L-methionine: Thr-145, Gly-166, Asp-188, and Asn-230.

It belongs to the methyltransferase superfamily. PrmA family.

The protein localises to the cytoplasm. The catalysed reaction is L-lysyl-[protein] + 3 S-adenosyl-L-methionine = N(6),N(6),N(6)-trimethyl-L-lysyl-[protein] + 3 S-adenosyl-L-homocysteine + 3 H(+). In terms of biological role, methylates ribosomal protein L11. The chain is Ribosomal protein L11 methyltransferase from Escherichia coli O7:K1 (strain IAI39 / ExPEC).